The chain runs to 572 residues: Proline--tRNA ligase (572 aa).

Belongs to the class-II aminoacyl-tRNA synthetase family. ProS type 1 subfamily. In terms of assembly, homodimer.

Its subcellular location is the cytoplasm. The enzyme catalyses tRNA(Pro) + L-proline + ATP = L-prolyl-tRNA(Pro) + AMP + diphosphate. Its function is as follows. Catalyzes the attachment of proline to tRNA(Pro) in a two-step reaction: proline is first activated by ATP to form Pro-AMP and then transferred to the acceptor end of tRNA(Pro). As ProRS can inadvertently accommodate and process non-cognate amino acids such as alanine and cysteine, to avoid such errors it has two additional distinct editing activities against alanine. One activity is designated as 'pretransfer' editing and involves the tRNA(Pro)-independent hydrolysis of activated Ala-AMP. The other activity is designated 'posttransfer' editing and involves deacylation of mischarged Ala-tRNA(Pro). The misacylated Cys-tRNA(Pro) is not edited by ProRS. This Buchnera aphidicola subsp. Acyrthosiphon pisum (strain APS) (Acyrthosiphon pisum symbiotic bacterium) protein is Proline--tRNA ligase.